The following is a 434-amino-acid chain: MIEKVYCSEVKPELEGKKVKLAGWVYSNMKVGKKIFLWIRDSTGIVQTVIAKNVVGEEVFEKAKKLGRESSVIVEGIVKADERAPGGAEVRVEKLEVIQAVSEFPIPENPEQASPELLLDYRHLHIRTPKASAIMKVKETLIMAAREWLLKDGWHEVFPPILVTGAVEGGATLFKLKYFDKYAYLSQSAQLYLEAAIFGLEKVWSLTPSFRAEKSRTRRHLTEFWHLELEAAWMDLWDIMKVEEELVSYMVQRTLELRKKEIEMFRDDLTTLKNTEPPFPRISYDEAIDILQSKGINVQWGDDLGADEERVLTEEFDRPFFVYGYPKQIKAFYMKEDPNDPRKVLAADMLAPEGYGEIIGGSQREDDYEKLLNRILEEGMDPKDYEWYLDLRKYGSVPHSGFGLGVERLVAWVLKLDHIRWASLFPRTPARLYP.

The protein belongs to the class-II aminoacyl-tRNA synthetase family.

It is found in the cytoplasm. It catalyses the reaction tRNA(Asn) + L-asparagine + ATP = L-asparaginyl-tRNA(Asn) + AMP + diphosphate + H(+). The protein is Asparagine--tRNA ligase (asnS) of Pyrococcus furiosus (strain ATCC 43587 / DSM 3638 / JCM 8422 / Vc1).